Consider the following 306-residue polypeptide: Zinc finger protein 625 (306 aa).

The C2H2-type 1; degenerate zinc finger occupies P31–D53. 8 consecutive C2H2-type zinc fingers follow at residues Y69–H91, Y97–H119, Y125–H147, Y153–H175, Y181–H203, Y209–H231, Y237–H259, and Y265–H287. Y209 is modified (phosphotyrosine). Residues H287 to A306 are disordered.

This sequence belongs to the krueppel C2H2-type zinc-finger protein family.

It is found in the nucleus. Its function is as follows. May be involved in transcriptional regulation. This chain is Zinc finger protein 625 (ZNF625), found in Homo sapiens (Human).